The following is a 430-amino-acid chain: Adenylosuccinate synthetase (430 aa).

Residues 12-18 (GDEGKGK) and 40-42 (GHT) each bind GTP. The Proton acceptor role is filled by Asp-13. Mg(2+) contacts are provided by Asp-13 and Gly-40. IMP contacts are provided by residues 13-16 (DEGK), 38-41 (NAGH), Thr-128, Arg-142, Gln-223, Thr-238, and Arg-302. The active-site Proton donor is the His-41. 298-304 (TTTGRPR) contributes to the substrate binding site. GTP is bound by residues Arg-304, 330–332 (SID), and 413–415 (SVG).

It belongs to the adenylosuccinate synthetase family. As to quaternary structure, homodimer. It depends on Mg(2+) as a cofactor.

Its subcellular location is the cytoplasm. The enzyme catalyses IMP + L-aspartate + GTP = N(6)-(1,2-dicarboxyethyl)-AMP + GDP + phosphate + 2 H(+). It participates in purine metabolism; AMP biosynthesis via de novo pathway; AMP from IMP: step 1/2. In terms of biological role, plays an important role in the de novo pathway of purine nucleotide biosynthesis. Catalyzes the first committed step in the biosynthesis of AMP from IMP. This is Adenylosuccinate synthetase from Lactococcus lactis subsp. lactis (strain IL1403) (Streptococcus lactis).